Consider the following 379-residue polypeptide: Lipid-A-disaccharide synthase (379 aa).

Belongs to the LpxB family.

The enzyme catalyses a lipid X + a UDP-2-N,3-O-bis[(3R)-3-hydroxyacyl]-alpha-D-glucosamine = a lipid A disaccharide + UDP + H(+). Its pathway is bacterial outer membrane biogenesis; LPS lipid A biosynthesis. Functionally, condensation of UDP-2,3-diacylglucosamine and 2,3-diacylglucosamine-1-phosphate to form lipid A disaccharide, a precursor of lipid A, a phosphorylated glycolipid that anchors the lipopolysaccharide to the outer membrane of the cell. In Aeromonas hydrophila subsp. hydrophila (strain ATCC 7966 / DSM 30187 / BCRC 13018 / CCUG 14551 / JCM 1027 / KCTC 2358 / NCIMB 9240 / NCTC 8049), this protein is Lipid-A-disaccharide synthase.